A 298-amino-acid polypeptide reads, in one-letter code: Acetylglutamate kinase (298 aa).

Substrate is bound by residues 73–74, R95, and N188; that span reads GG.

Belongs to the acetylglutamate kinase family. ArgB subfamily.

It localises to the cytoplasm. It carries out the reaction N-acetyl-L-glutamate + ATP = N-acetyl-L-glutamyl 5-phosphate + ADP. Its pathway is amino-acid biosynthesis; L-arginine biosynthesis; N(2)-acetyl-L-ornithine from L-glutamate: step 2/4. Functionally, catalyzes the ATP-dependent phosphorylation of N-acetyl-L-glutamate. This chain is Acetylglutamate kinase, found in Nostoc punctiforme (strain ATCC 29133 / PCC 73102).